Here is a 1073-residue protein sequence, read N- to C-terminus: Receptor-type guanylate cyclase gcy-23 (1073 aa).

Residues methionine 1–cysteine 15 form the signal peptide. The Extracellular portion of the chain corresponds to alanine 16–threonine 458. Asparagine 336 carries an N-linked (GlcNAc...) asparagine glycan. Residues leucine 459–leucine 479 traverse the membrane as a helical segment. Residues serine 480–isoleucine 1073 are Cytoplasmic-facing. The 301-residue stretch at methionine 508–leucine 808 folds into the Protein kinase domain. Positions serine 813–asparagine 844 form a coiled coil. The Guanylate cyclase domain maps to threonine 878–glutamate 1008. Mg(2+) is bound by residues aspartate 883, isoleucine 884, and aspartate 927.

This sequence belongs to the adenylyl cyclase class-4/guanylyl cyclase family. As to expression, expressed specifically in AFD sensory neurons.

It is found in the cell membrane. It localises to the cell projection. Its subcellular location is the cilium. It catalyses the reaction GTP = 3',5'-cyclic GMP + diphosphate. Its function is as follows. Guanylate cyclase involved in the production of the second messenger cGMP. Regulates thermotaxis responses in AFD sensory neurons. May regulate AFD neuronal activity such as calcium responses to temperature gradients. In Caenorhabditis elegans, this protein is Receptor-type guanylate cyclase gcy-23.